We begin with the raw amino-acid sequence, 291 residues long: N-acetylmannosamine kinase (291 aa).

ATP-binding positions include 5–12 (AIDIGGTK) and 132–139 (GVGGGVVS). The Zn(2+) site is built by His-156, Cys-166, Cys-168, and Cys-173.

Belongs to the ROK (NagC/XylR) family. NanK subfamily. Homodimer.

The catalysed reaction is an N-acyl-D-mannosamine + ATP = an N-acyl-D-mannosamine 6-phosphate + ADP + H(+). It participates in amino-sugar metabolism; N-acetylneuraminate degradation; D-fructose 6-phosphate from N-acetylneuraminate: step 2/5. Functionally, catalyzes the phosphorylation of N-acetylmannosamine (ManNAc) to ManNAc-6-P. The protein is N-acetylmannosamine kinase of Escherichia coli O9:H4 (strain HS).